Here is a 961-residue protein sequence, read N- to C-terminus: E3 ubiquitin-protein ligase TRIM37 (961 aa).

M1 bears the N-acetylmethionine mark. The RING-type; degenerate zinc-finger motif lies at 15 to 55; that stretch reads CFICMEKLRDARLCPHCSKLCCFSCIRRWLTEQRAQCPHCR. The B box-type zinc-finger motif lies at 90-132; the sequence is NEKDKCENHHEKLSVFCWTCKKCICHQCALWGGMHGGHTFKPL. 4 residues coordinate Zn(2+): C95, H98, C117, and H124. Positions 132 to 234 form a coiled coil; sequence LAEIYEQHVT…VEHQLRSCSK (103 aa). The 128-residue stretch at 276 to 403 folds into the MATH domain; that stretch reads YDSATFVLEN…NDTVILRFQV (128 aa). Residues 419-450 are a coiled coil; it reads ITQLEAAQTGYIQQINNLKERLTIELSRTQKS. 5 disordered regions span residues 447 to 514, 529 to 561, 645 to 665, 776 to 811, and 874 to 961; these read TQKS…HHEL, VNHL…SGEN, SLLQ…KQQA, AVDS…SPRA, and LESH…GGGR. Position 454 is a phosphoserine (S454). The span at 504–514 shows a compositional bias: basic and acidic residues; sequence KIQNEDYHHEL. Positions 535–545 are enriched in low complexity; that stretch reads SSSSASSTATS. The segment covering 548 to 561 has biased composition (acidic residues); sequence EENDIDEETMSGEN. Residues 776-787 show a composition bias toward basic and acidic residues; the sequence is AVDSGENSRSKG. Residues 795 to 806 show a composition bias toward low complexity; that stretch reads GSSGSSQSGSRH. The segment covering 903–915 has biased composition (acidic residues); that stretch reads SDIECDTENEEQE.

The protein belongs to the TRIM/RBCC family. Associates with the PRC2/EED-EZH2 complex. In terms of processing, auto-ubiquitinated. In terms of tissue distribution, highly expressed in testis and brain. In embryonic tissues, expressed in epithelia, including ducts of the developing pancreas, epithelium of the midgut and nasal epithelium. In adult, detected in the central and peripheral nervous systems, including enteric ganglia, retina and the adrenal medulla (at protein level).

It localises to the chromosome. It is found in the cytoplasm. The protein resides in the perinuclear region. The protein localises to the peroxisome membrane. It carries out the reaction S-ubiquitinyl-[E2 ubiquitin-conjugating enzyme]-L-cysteine + [acceptor protein]-L-lysine = [E2 ubiquitin-conjugating enzyme]-L-cysteine + N(6)-ubiquitinyl-[acceptor protein]-L-lysine.. Its pathway is protein modification; protein ubiquitination. In terms of biological role, E3 ubiquitin-protein ligase required to prevent centriole reduplication. Probably acts by ubiquitinating positive regulators of centriole reduplication. Mediates monoubiquitination of 'Lys-119' of histone H2A (H2AK119Ub), a specific tag for epigenetic transcriptional repression: associates with some Polycomb group (PcG) multiprotein PRC2-like complex and mediates repression of target genes. Also acts as a positive regulator of peroxisome import by mediating monoubiquitination of PEX5 at 'Lys-472': monoubiquitination promotes PEX5 stabilitation by preventing its polyubiquitination and degradation by the proteasome. The protein is E3 ubiquitin-protein ligase TRIM37 of Mus musculus (Mouse).